Reading from the N-terminus, the 178-residue chain is Endothelin-2 (178 aa).

Residues 1–24 form the signal peptide; it reads MVAVPTAWCSVALALLLALQEGKG. A propeptide spanning residues 25-46 is cleaved from the precursor; that stretch reads QVAAAPDHPAPSPRARGSHLRP. Intrachain disulfides connect C49–C63 and C51–C59. The propeptide occupies 70–178; that stretch reads VNTPGQTAPY…RPMYPRRRKT (109 aa). The interval 96-111 is endothelin-like; that stretch reads CECSSSGDPACATFCH. The interval 158 to 178 is disordered; the sequence is ARQHQEAEREPRPMYPRRRKT. Over residues 160–169 the composition is skewed to basic and acidic residues; it reads QHQEAEREPR.

The protein belongs to the endothelin/sarafotoxin family.

It localises to the secreted. Its function is as follows. Endothelins are endothelium-derived vasoconstrictor peptides. The chain is Endothelin-2 (EDN2) from Mustela putorius furo (European domestic ferret).